The primary structure comprises 486 residues: FAD-dependent oxidoreductase domain-containing protein 1 (486 aa).

A helical transmembrane segment spans residues 66–82 (VVIVGGGVLGLSVAYWL).

Associates with components of the mitochondrial respiratory chain complex I. FAD serves as cofactor.

It is found in the mitochondrion inner membrane. Functionally, required for the assembly of the mitochondrial membrane respiratory chain NADH dehydrogenase (Complex I). Involved in mid-late stages of complex I assembly. The chain is FAD-dependent oxidoreductase domain-containing protein 1 (FOXRED1) from Bos taurus (Bovine).